A 1362-amino-acid chain; its full sequence is DNA-directed RNA polymerase subunit beta (1362 aa).

Belongs to the RNA polymerase beta chain family. The RNAP catalytic core consists of 2 alpha, 1 beta, 1 beta' and 1 omega subunit. When a sigma factor is associated with the core the holoenzyme is formed, which can initiate transcription.

It carries out the reaction RNA(n) + a ribonucleoside 5'-triphosphate = RNA(n+1) + diphosphate. DNA-dependent RNA polymerase catalyzes the transcription of DNA into RNA using the four ribonucleoside triphosphates as substrates. In Acinetobacter baylyi (strain ATCC 33305 / BD413 / ADP1), this protein is DNA-directed RNA polymerase subunit beta.